Reading from the N-terminus, the 149-residue chain is Transcriptional repressor NrdR (149 aa).

The segment at 3-34 is a zinc-finger region; that stretch reads CPFCFAVDTKVIDSRLVGGGSSVRRRRQCLVC. The region spanning 49–139 is the ATP-cone domain; that stretch reads PRVVKSNDVR…VYRSFEDIKE (91 aa).

It belongs to the NrdR family. Zn(2+) is required as a cofactor.

Its function is as follows. Negatively regulates transcription of bacterial ribonucleotide reductase nrd genes and operons by binding to NrdR-boxes. In Shigella boydii serotype 18 (strain CDC 3083-94 / BS512), this protein is Transcriptional repressor NrdR.